The chain runs to 568 residues: Potassium-transporting ATPase potassium-binding subunit (568 aa).

Transmembrane regions (helical) follow at residues 6 to 26 (ILQI…IGGF), 64 to 84 (TGYA…TYLI), 135 to 155 (IALA…AIAF), 179 to 199 (LYIL…QGVI), 254 to 274 (LANL…TYTF), 285 to 305 (WALL…VYPA), 382 to 402 (GLYG…LMVG), 419 to 439 (MVML…AAGI), 459 to 481 (VLYG…SANT), 488 to 508 (LGIA…AAAG), and 529 to 549 (LFVT…FFPA).

The protein belongs to the KdpA family. In terms of assembly, the system is composed of three essential subunits: KdpA, KdpB and KdpC.

Its subcellular location is the cell inner membrane. In terms of biological role, part of the high-affinity ATP-driven potassium transport (or Kdp) system, which catalyzes the hydrolysis of ATP coupled with the electrogenic transport of potassium into the cytoplasm. This subunit binds the periplasmic potassium ions and delivers the ions to the membrane domain of KdpB through an intramembrane tunnel. The polypeptide is Potassium-transporting ATPase potassium-binding subunit (Solibacter usitatus (strain Ellin6076)).